The primary structure comprises 167 residues: Swarming motility protein SwrB (167 aa).

The segment at 63-105 is disordered; the sequence is IENKASSASQSDEESQKSGLQTSETYQERDPVQEAENLPEHIE. Over residues 88–105 the composition is skewed to basic and acidic residues; that stretch reads YQERDPVQEAENLPEHIE.

Its function is as follows. Required for swarming motility and for maximal sigma-D activity. The sequence is that of Swarming motility protein SwrB (swrB) from Bacillus subtilis (strain 168).